Reading from the N-terminus, the 298-residue chain is Aclacinomycin methylesterase RdmC (298 aa).

Residues 24–277 (PALLLVMGGN…LAEIPGMGHA (254 aa)) enclose the AB hydrolase-1 domain. Catalysis depends on residues serine 102, aspartate 248, and histidine 276.

It belongs to the AB hydrolase superfamily. Hydrolase RdmC family. In terms of assembly, monomer.

It catalyses the reaction aclacinomycin T + H2O = 15-demethylaclacinomycin T + methanol. It participates in antibiotic biosynthesis; aclacinomycin biosynthesis. Involved in the biosynthesis of the anthracycline aclacinomycin which is an aromatic polyketide antibiotic that exhibits high cytotoxicity and is widely applied in the chemotherapy of a variety of cancers. Catalyzes the removal of the methoxy group from the C-15 position of aclacinomycin T and A to yield 15-demethoxyaclacinomycin T and A, respectively. In Streptomyces purpurascens, this protein is Aclacinomycin methylesterase RdmC (rdmC).